A 620-amino-acid polypeptide reads, in one-letter code: Rpb7-binding protein seb1 (620 aa).

Positions 1–151 constitute a CID domain; sequence MSGIAEFDGI…SLRSKLKDAM (151 aa). Disordered stretches follow at residues 151-191 and 327-398; these read MAST…RPVE and SVPL…TIPP. Ser-343 carries the post-translational modification Phosphoserine. Residues 361–374 are compositionally biased toward low complexity; sequence PSPSHLSIPSTLPP. The 73-residue stretch at 406–478 folds into the RRM domain; the sequence is RTLFLGGITR…TTIRTKWGVG (73 aa). Positions 558 to 620 are disordered; that stretch reads RGRKPYRGGP…YVSQPPWQPQ (63 aa). Over residues 570-580 the composition is skewed to basic and acidic residues; the sequence is HHGERHFDSGN.

In terms of assembly, interacts with rpb7.

The protein resides in the nucleus. In terms of biological role, involved in the processing of pol II transcripts. The sequence is that of Rpb7-binding protein seb1 (seb1) from Schizosaccharomyces pombe (strain 972 / ATCC 24843) (Fission yeast).